The following is a 107-amino-acid chain: uncharacterized protein (107 aa).

In terms of domain architecture, HTH cro/C1-type spans 13–68; the sequence is LQEEFLEPLSLKISDLAQILDVHRNTASNIVNNSSRITLEMAVKLAKVFDTTPEFW. Positions 24–43 form a DNA-binding region, H-T-H motif; sequence KISDLAQILDVHRNTASNIV.

This sequence belongs to the VapA/VapI family.

This is an uncharacterized protein from Haemophilus influenzae (strain ATCC 51907 / DSM 11121 / KW20 / Rd).